The primary structure comprises 461 residues: Zinc transporter 6 (461 aa).

Residues 1 to 33 are Cytoplasmic-facing; the sequence is MGTIHLFRKPQRSFFGKLLREFRLVAADRRSWK. The helical transmembrane segment at 34–54 threads the bilayer; it reads ILLFGVINLICTGFLLMWCSS. Residues 55–64 lie on the Extracellular side of the membrane; it reads TNSIALTAYT. A helical transmembrane segment spans residues 65–85; it reads YLTIFDLFSLMTCLISYWVTL. Residues 86 to 98 lie on the Cytoplasmic side of the membrane; the sequence is RKPSPVYSFGFER. A helical membrane pass occupies residues 99–119; sequence LEVLAVFASTVLAQLGALFIL. The Extracellular portion of the chain corresponds to 120–134; sequence KESAERFLEQPEIHT. The helical transmembrane segment at 135 to 155 threads the bilayer; sequence GRLLVGTFVALCFNLFTMLSI. Over 156–200 the chain is Cytoplasmic; it reads RNKPFAYVSEAASTSWLQEHVADLSRSLCGIIPGLSSIFLPRMNP. The chain crosses the membrane as a helical span at residues 201–221; the sequence is FVLIDLAGAFALCITYMLIEI. The Extracellular segment spans residues 222 to 223; it reads NN. A helical transmembrane segment spans residues 224–244; that stretch reads YFAVDTASAIAIALMTFGTMY. Topologically, residues 245-461 are cytoplasmic; sequence PMSVYSGKVL…TNNRIGQPRP (217 aa). Positions 371–392 are disordered; sequence NPVTSTPAKPSSPPPEFSFNTP.

The protein belongs to the cation diffusion facilitator (CDF) transporter (TC 2.A.4) family. SLC30A subfamily. In terms of assembly, heterodimer with SLC30A5; form a functional zinc ion transmembrane transporter. Expressed in brain; especially in cerebellum, hippocampus, parahippocampal gyrus, superior and middle temporal gyrus. Also expressed in B-cells, colon, eye, and lung. Lower expression was present in bone, brain, cervix, ear, heart, kidney, muscle, nerve, pancreas, prostate, skin, stomach, and testis.

The protein localises to the golgi apparatus. The protein resides in the trans-Golgi network membrane. Its function is as follows. Has probably no intrinsic transporter activity but together with SLC30A5 forms a functional zinc ion:proton antiporter heterodimer, mediating zinc entry into the lumen of organelles along the secretory pathway. As part of that zinc ion:proton antiporter, contributes to zinc ion homeostasis within the early secretory pathway and regulates the activation and folding of enzymes like alkaline phosphatases and enzymes involved in phosphatidylinositol glycan anchor biosynthesis. This Homo sapiens (Human) protein is Zinc transporter 6.